A 955-amino-acid polypeptide reads, in one-letter code: Sex determination protein fruitless (955 aa).

Disordered regions lie at residues 1–55 and 70–89; these read MMAT…HAHS and IETD…LPLP. A compositionally biased stretch (basic residues) spans 35–55; that stretch reads PHGHGHLHSHAHAHGHGHAHS. Pro residues predominate over residues 76–89; the sequence is APPPPLPPPPLPLP. The region spanning 131–196 is the BTB domain; the sequence is CDVTLACEGE…MYKGEVNVGQ (66 aa). Disordered stretches follow at residues 229 to 288, 352 to 526, and 784 to 814; these read LRDS…SMSE, NRSA…LGGG, and ANHQ…SGAG. Polar residues predominate over residues 233–246; sequence AASSPTGRGPSNYT. Composition is skewed to basic and acidic residues over residues 258–279 and 360–379; these read AMRE…DELT and CSDR…RDDL. Positions 387–420 are enriched in low complexity; that stretch reads KDNNNSNSSSTGGNNNNNNNNNNNSSSNNNNSSS. Residues 421–446 show a composition bias toward basic and acidic residues; the sequence is NRERNNSGERERERERERERDRDREL. Composition is skewed to low complexity over residues 464–475 and 790–814; these read SSSNCDNSLSSS and QHPP…SGAG. The C2H2-type zinc finger occupies 918-941; the sequence is HECPVCGQKFTRRDNMKAHCKIKH.

As to expression, expressed in parts of the adult male brain associated with the courtship song and steps of the male courtship. Also expressed in the larval and pupal male mushroom body and optic lobe. Expressed in pupal female optic lobe.

It localises to the nucleus. Probably acts as a transcriptional regulator. Part of the somatic sex determination hierarchy; sex determination genes transformer (tra) and transformer-2 (tra-2) switch fru splicing from the male-specific pattern to the female-specific pattern through activation of the female-specific fru 5'-splice site. Vital for the development of males and females. Controls the development of the male specific abdominal muscle of Lawrence. Plays a role in male courtship behavior and sexual orientation. Enhances male-specific expression of takeout in brain-associated fat body. This chain is Sex determination protein fruitless (fru), found in Drosophila melanogaster (Fruit fly).